A 723-amino-acid polypeptide reads, in one-letter code: UPF0313 protein YgiQ (723 aa).

The 279-residue stretch at 372–650 (AYEMIRFSIN…KALLRYHDPA (279 aa)) folds into the Radical SAM core domain. The [4Fe-4S] cluster site is built by cysteine 386, cysteine 390, and cysteine 393. A disordered region spans residues 686-723 (EARRQNRNTRPALTKHTPVEHQRQGLAANKKRGKGAGR). A compositionally biased stretch (basic residues) spans 714–723 (NKKRGKGAGR).

This sequence belongs to the UPF0313 family. The cofactor is [4Fe-4S] cluster.

The sequence is that of UPF0313 protein YgiQ from Salmonella typhimurium (strain LT2 / SGSC1412 / ATCC 700720).